A 700-amino-acid polypeptide reads, in one-letter code: MKVREILVTSALPYANGDIHLGHLVEYIQTDIWVRSMKAQGHKVTYVCADDAHGTAIMLKAEDNGVTPEQQIANVQAAHEADFAKFLINFDNYHSTHSEENREFSELIYRRLRDAGHISTRDVEQLFDPEKQLFLADRFVKGTCPECAATDQYGDNCEVCGTTYDATELKNPYSTLSNATPILKTSKHYFFDLPEFEQFLKDWTRSDNRLQTSVANKLQEWFDAGLTSWDISRDAPYFGFQIPDTPSDEPDKYFYVWLDAPVGYMASFQNLCDKRAGTEEALDFDHYWAQENEHKTEVYHFIGKDIVYFHALFWPAMLAGSELRTPTGVFAHGFLMVNGEKMSKSRGTFIKADTYAEHLHPEYLRYYFASKLSDKVEDINLDLEDFMQKVNSDLVGKVVNIASRSAGFLVKKYDGMLTDVCAEPSLLEDITKTGDEIAAAYENREFSRAMRLIMQCADKANEYIDDKKPWALAKVEGAEQEVQDVCSVAINIFRQLMVYLAPVLPELTANAKEFLNIDDLSFASRNEWLLGHQINKFKPLMQRIEEKDIAAMVEDSKASLTQVGAPTASQDDKAAAKNTSPAAMPSSTEQADYIGIEDFAKVEMKVAHVIACNHVEGADKLLQFTLDVGEAQPRNVFSGIRKFYEPEQLQGKKVICVTNLAPRKMKFGISEGMVLSSGDPKTGLVVITLPDEAVIGDSLA.

A 'HIGH' region motif is present at residues 13-23 (PYANGDIHLGH). Cys-144, Cys-147, Cys-157, and Cys-160 together coordinate Zn(2+). The 'KMSKS' region signature appears at 341–345 (KMSKS). Position 344 (Lys-344) interacts with ATP. The interval 562–587 (QVGAPTASQDDKAAAKNTSPAAMPSS) is disordered. The span at 577 to 587 (KNTSPAAMPSS) shows a compositional bias: polar residues. Residues 598-700 (DFAKVEMKVA…DEAVIGDSLA (103 aa)) enclose the tRNA-binding domain.

The protein belongs to the class-I aminoacyl-tRNA synthetase family. MetG type 1 subfamily. Homodimer. Requires Zn(2+) as cofactor.

It is found in the cytoplasm. It carries out the reaction tRNA(Met) + L-methionine + ATP = L-methionyl-tRNA(Met) + AMP + diphosphate. Its function is as follows. Is required not only for elongation of protein synthesis but also for the initiation of all mRNA translation through initiator tRNA(fMet) aminoacylation. The polypeptide is Methionine--tRNA ligase (Psychrobacter cryohalolentis (strain ATCC BAA-1226 / DSM 17306 / VKM B-2378 / K5)).